The primary structure comprises 657 residues: Keratinocyte proline-rich protein (657 aa).

Disordered regions lie at residues 285–320 (QGTY…SPPR), 425–493 (HPFP…PSPE), and 517–568 (QPVP…CGQP). Over residues 292–302 (TSQRRSQSTSR) the composition is skewed to low complexity. The span at 434–444 (QHLDRSPESSR) shows a compositional bias: basic and acidic residues. Residue Ser-442 is modified to Phosphoserine. Composition is skewed to pro residues over residues 449 to 493 (VPAP…PSPE), 517 to 530 (QPVP…VPRP), and 539 to 561 (GPRP…PCSS).

Its subcellular location is the cytoplasm. This is Keratinocyte proline-rich protein from Mus musculus (Mouse).